A 71-amino-acid chain; its full sequence is DNA-directed RNA polymerase subunit omega (71 aa).

The protein belongs to the RNA polymerase subunit omega family. The RNAP catalytic core consists of 2 alpha, 1 beta, 1 beta' and 1 omega subunit. When a sigma factor is associated with the core the holoenzyme is formed, which can initiate transcription.

It carries out the reaction RNA(n) + a ribonucleoside 5'-triphosphate = RNA(n+1) + diphosphate. Its function is as follows. Promotes RNA polymerase assembly. Latches the N- and C-terminal regions of the beta' subunit thereby facilitating its interaction with the beta and alpha subunits. This Alkaliphilus oremlandii (strain OhILAs) (Clostridium oremlandii (strain OhILAs)) protein is DNA-directed RNA polymerase subunit omega.